Reading from the N-terminus, the 260-residue chain is MSDSVCPIDAKEELLRECENIWKEMEKCQSKLTLLAAEPVPESDAKVSLLLTRMQALRAEYHQWQKRNPELISTNPEVLLLLGEEELQKVKKELEMVLSAVQLKNEKLKEDLEREQQWHDEQVQILNAFKEIEEEMKKEVVTDSEKRVFQELKNQMLELKEYKKKLMNALGEFLEEHFPLPEKNGNAKKKRYSEEPPEQVITIHEILEILLNQLMSTPHEPYVTVDDSFWPPYLELLLRSGIVLRHPEDPNRIRLEAFHE.

The stretch at 84–173 forms a coiled coil; sequence EEELQKVKKE…KKLMNALGEF (90 aa).

This sequence belongs to the CENP-K/MCM22 family. In terms of assembly, component of the CENPA-HI complex, at least composed of CENPH, CENPI, CENPK, CENPL, CENPM, CENPO and CENPP.

The protein localises to the nucleus. Its subcellular location is the chromosome. It is found in the centromere. It localises to the kinetochore. Functionally, component of the CENPA-HI complex, a centromeric complex involved in assembly of kinetochore proteins, mitotic progression and chromosome segregation. The sequence is that of Centromere protein K (CENPK) from Gallus gallus (Chicken).